The primary structure comprises 357 residues: Dihydroorotate dehydrogenase (quinone) (357 aa).

FMN-binding positions include 61 to 65 (AGFDK) and T85. K65 provides a ligand contact to substrate. 110 to 114 (NRFGF) lines the substrate pocket. Positions 141 and 172 each coordinate FMN. Residue N172 participates in substrate binding. The Nucleophile role is filled by S175. Substrate is bound at residue N177. Residues K217 and G245 each coordinate FMN. Substrate is bound at residue 246-247 (NT). FMN contacts are provided by residues G268, G297, and 318-319 (YS).

Belongs to the dihydroorotate dehydrogenase family. Type 2 subfamily. As to quaternary structure, monomer. FMN is required as a cofactor.

The protein localises to the cell membrane. It carries out the reaction (S)-dihydroorotate + a quinone = orotate + a quinol. It participates in pyrimidine metabolism; UMP biosynthesis via de novo pathway; orotate from (S)-dihydroorotate (quinone route): step 1/1. Functionally, catalyzes the conversion of dihydroorotate to orotate with quinone as electron acceptor. The sequence is that of Dihydroorotate dehydrogenase (quinone) from Xanthobacter autotrophicus (strain ATCC BAA-1158 / Py2).